The sequence spans 5087 residues: Nonribosomal peptide synthetase sidC (5087 aa).

Residues His-165–Ile-563 are adenylation 1. The Carrier 1 domain occupies Glu-671–Gln-744. Ser-705 bears the O-(pantetheine 4'-phosphoryl)serine mark. Residues Asp-782–Asp-1112 are condensation 1. Residues Glu-1217 to Arg-1611 form an adenylation 2 region. A Carrier 2 domain is found at Glu-1740 to Ile-1817. The residue at position 1777 (Ser-1777) is an O-(pantetheine 4'-phosphoryl)serine. Residues Lys-1855 to Ser-2272 are condensation 2. Residues Glu-2302–Lys-2378 enclose the Carrier 3 domain. O-(pantetheine 4'-phosphoryl)serine is present on Ser-2339. Positions Pro-2419 to Ser-2831 are condensation 3. Positions Ala-2860–Arg-3258 are adenylation 3. The 78-residue stretch at Thr-3387–Asp-3464 folds into the Carrier 4 domain. Ser-3424 carries the post-translational modification O-(pantetheine 4'-phosphoryl)serine. The condensation 4 stretch occupies residues Ile-3506–Asn-3910. The Carrier 5 domain maps to Phe-3943 to Gly-4019. An O-(pantetheine 4'-phosphoryl)serine modification is found at Ser-3980. Residues Glu-4051–Ala-4416 are condensation 5. The 74-residue stretch at Ser-4496 to Arg-4569 folds into the Carrier 6 domain. An O-(pantetheine 4'-phosphoryl)serine modification is found at Ser-4530. The segment at Phe-4610–Ser-4913 is condensation 6. The segment at Asp-5013–Ala-5048 is disordered.

It belongs to the NRP synthetase family.

Its pathway is siderophore biosynthesis. Nonribosomal peptide synthetase; part of the siderophore biosynthetic pathway. Arthroderma benhamiae produces 2 types of extracellular siderophores, ferrichrome C and ferricrocin. The biosynthesis of these siderophores depends on the hydroxylation of ornithine to N(5)-hydroxyornithine, catalyzed by the monooxygenase sidA. The structure of ferricrocin differs from ferrichrome C only by a serine for alanine substitution and the assembly of both siderophores is suggested to be performed by the nonribosomal peptide synthase (NRPS) sidC. The chain is Nonribosomal peptide synthetase sidC from Arthroderma benhamiae (strain ATCC MYA-4681 / CBS 112371) (Trichophyton mentagrophytes).